The primary structure comprises 158 residues: 6,7-dimethyl-8-ribityllumazine synthase (158 aa).

5-amino-6-(D-ribitylamino)uracil contacts are provided by residues Phe-24, 62-64 (CFE), and 86-88 (AVI). Position 91-92 (91-92 (DT)) interacts with (2S)-2-hydroxy-3-oxobutyl phosphate. The active-site Proton donor is His-94. Residue Phe-119 participates in 5-amino-6-(D-ribitylamino)uracil binding. Arg-133 contributes to the (2S)-2-hydroxy-3-oxobutyl phosphate binding site.

It belongs to the DMRL synthase family.

The catalysed reaction is (2S)-2-hydroxy-3-oxobutyl phosphate + 5-amino-6-(D-ribitylamino)uracil = 6,7-dimethyl-8-(1-D-ribityl)lumazine + phosphate + 2 H2O + H(+). It participates in cofactor biosynthesis; riboflavin biosynthesis; riboflavin from 2-hydroxy-3-oxobutyl phosphate and 5-amino-6-(D-ribitylamino)uracil: step 1/2. In terms of biological role, catalyzes the formation of 6,7-dimethyl-8-ribityllumazine by condensation of 5-amino-6-(D-ribitylamino)uracil with 3,4-dihydroxy-2-butanone 4-phosphate. This is the penultimate step in the biosynthesis of riboflavin. The chain is 6,7-dimethyl-8-ribityllumazine synthase from Picosynechococcus sp. (strain ATCC 27264 / PCC 7002 / PR-6) (Agmenellum quadruplicatum).